We begin with the raw amino-acid sequence, 199 residues long: Recombination protein RecR (199 aa).

The C4-type zinc-finger motif lies at 57–72; that stretch reads CRQCRTLTEDELCPQC. In terms of domain architecture, Toprim spans 80–174; sequence SLLCVVQSPV…TISRIAHGVP (95 aa).

This sequence belongs to the RecR family.

Its function is as follows. May play a role in DNA repair. It seems to be involved in an RecBC-independent recombinational process of DNA repair. It may act with RecF and RecO. The sequence is that of Recombination protein RecR from Stutzerimonas stutzeri (strain A1501) (Pseudomonas stutzeri).